Here is a 124-residue protein sequence, read N- to C-terminus: Small ribosomal subunit protein uS13 (124 aa).

Positions 93-117 are enriched in basic residues; the sequence is KNLPVRGQRTRTNARTRKGPRKTVA. Residues 93 to 124 form a disordered region; it reads KNLPVRGQRTRTNARTRKGPRKTVANKKIESK.

It belongs to the universal ribosomal protein uS13 family. In terms of assembly, part of the 30S ribosomal subunit. Forms a loose heterodimer with protein S19. Forms two bridges to the 50S subunit in the 70S ribosome.

Located at the top of the head of the 30S subunit, it contacts several helices of the 16S rRNA. In the 70S ribosome it contacts the 23S rRNA (bridge B1a) and protein L5 of the 50S subunit (bridge B1b), connecting the 2 subunits; these bridges are implicated in subunit movement. Contacts the tRNAs in the A and P-sites. The polypeptide is Small ribosomal subunit protein uS13 (Mycoplasma genitalium (strain ATCC 33530 / DSM 19775 / NCTC 10195 / G37) (Mycoplasmoides genitalium)).